Reading from the N-terminus, the 441-residue chain is UDP-N-acetylglucosamine--N-acetylmuramyl-(pentapeptide) pyrophosphoryl-undecaprenol N-acetylglucosamine transferase (441 aa).

UDP-N-acetyl-alpha-D-glucosamine contacts are provided by residues 28 to 30, N140, R176, S204, I257, and Q302; that span reads TGG.

This sequence belongs to the glycosyltransferase 28 family. MurG subfamily.

It is found in the cell inner membrane. The catalysed reaction is di-trans,octa-cis-undecaprenyl diphospho-N-acetyl-alpha-D-muramoyl-L-alanyl-D-glutamyl-meso-2,6-diaminopimeloyl-D-alanyl-D-alanine + UDP-N-acetyl-alpha-D-glucosamine = di-trans,octa-cis-undecaprenyl diphospho-[N-acetyl-alpha-D-glucosaminyl-(1-&gt;4)]-N-acetyl-alpha-D-muramoyl-L-alanyl-D-glutamyl-meso-2,6-diaminopimeloyl-D-alanyl-D-alanine + UDP + H(+). The protein operates within cell wall biogenesis; peptidoglycan biosynthesis. Its function is as follows. Cell wall formation. Catalyzes the transfer of a GlcNAc subunit on undecaprenyl-pyrophosphoryl-MurNAc-pentapeptide (lipid intermediate I) to form undecaprenyl-pyrophosphoryl-MurNAc-(pentapeptide)GlcNAc (lipid intermediate II). In Xanthomonas oryzae pv. oryzae (strain MAFF 311018), this protein is UDP-N-acetylglucosamine--N-acetylmuramyl-(pentapeptide) pyrophosphoryl-undecaprenol N-acetylglucosamine transferase.